Reading from the N-terminus, the 320-residue chain is o-succinylbenzoate synthase (320 aa).

The Proton donor role is filled by lysine 133. Aspartate 161, glutamate 190, and aspartate 213 together coordinate Mg(2+). Lysine 235 serves as the catalytic Proton acceptor.

It belongs to the mandelate racemase/muconate lactonizing enzyme family. MenC type 1 subfamily. It depends on a divalent metal cation as a cofactor.

It carries out the reaction (1R,6R)-6-hydroxy-2-succinyl-cyclohexa-2,4-diene-1-carboxylate = 2-succinylbenzoate + H2O. It functions in the pathway quinol/quinone metabolism; 1,4-dihydroxy-2-naphthoate biosynthesis; 1,4-dihydroxy-2-naphthoate from chorismate: step 4/7. The protein operates within quinol/quinone metabolism; menaquinone biosynthesis. Converts 2-succinyl-6-hydroxy-2,4-cyclohexadiene-1-carboxylate (SHCHC) to 2-succinylbenzoate (OSB). The sequence is that of o-succinylbenzoate synthase from Escherichia coli O6:K15:H31 (strain 536 / UPEC).